The sequence spans 260 residues: MKFLISPAKTLDLTSTPSIDTFSLPELLDESKELIDTIKPYSPADIASLMKLSDKLATLNVSRYQEWQKEHTRDNSRPAIYTFMGDVYTGLDAYSLNESDMKYAQKSLRILSGLYGLLKPLDLMQAYRLEMGTSLKNDRGSNLYQFWGDIIVDKINETLKEGELLVNLASNEYFKAVNKKKLTSPLISPNFLDEKNGKFKVISFYAKKARGLMARYLIENRCETLEELKAFDLAGYRYDPQQSTKDTPVFIRPESAEPKK.

It belongs to the UPF0246 family.

This chain is UPF0246 protein Mmwyl1_3597, found in Marinomonas sp. (strain MWYL1).